Consider the following 274-residue polypeptide: S-adenosylmethionine-dependent nucleotide dehydratase (274 aa).

A Radical SAM core domain is found at 1–215 (MAYKVNLHIT…VERHAEVSHD (215 aa)). Residues Cys-13, Cys-17, and Cys-20 each coordinate [4Fe-4S] cluster.

Belongs to the radical SAM superfamily. Prokaryotic viperin family. The cofactor is [4Fe-4S] cluster.

It catalyses the reaction CTP + AH2 + S-adenosyl-L-methionine = 3'-deoxy-3',4'-didehydro-CTP + 5'-deoxyadenosine + L-methionine + A + H2O + H(+). Functionally, expression of pVip6 in E.coli (strain MG1655) confers resistance to phages lambda, P1, SECphi6, SECphi8 and T7. Catalyzes the conversion of cytidine triphosphate (CTP) to 3'-deoxy-3',4'-didehydro-CTP (ddhCTP), probably via a SAM-dependent radical mechanism. The modified nucleotide represses transcription from T7 RNA polymerase-directed genes (possibly by acting as chain terminators), strongly suggesting these nucleotides block viral polymerase transcription. The chain is S-adenosylmethionine-dependent nucleotide dehydratase from Selenomonas ruminantium.